The primary structure comprises 313 residues: Malate dehydrogenase (313 aa).

Residues 8–13 (GAGNVG) and aspartate 33 each bind NAD(+). Residues arginine 83 and arginine 89 each coordinate substrate. Residues asparagine 96 and 119 to 121 (ISN) contribute to the NAD(+) site. Residues asparagine 121 and arginine 152 each contribute to the substrate site. Histidine 176 serves as the catalytic Proton acceptor.

Belongs to the LDH/MDH superfamily. MDH type 3 family.

It catalyses the reaction (S)-malate + NAD(+) = oxaloacetate + NADH + H(+). In terms of biological role, catalyzes the reversible oxidation of malate to oxaloacetate. The chain is Malate dehydrogenase from Bacteroides fragilis (strain ATCC 25285 / DSM 2151 / CCUG 4856 / JCM 11019 / LMG 10263 / NCTC 9343 / Onslow / VPI 2553 / EN-2).